The primary structure comprises 903 residues: Valine--tRNA ligase (903 aa).

The segment covering 1-15 (MVCVTDQNNENPSQN) has biased composition (polar residues). Positions 1–22 (MVCVTDQNNENPSQNRADKLPK) are disordered. The 'HIGH' region motif lies at 61 to 71 (PNVTGQLHMGH). Residues 552-556 (KMSKS) carry the 'KMSKS' region motif. ATP is bound at residue lysine 555. Residues 836–902 (TVDVAAERKR…ERITKRLEEL (67 aa)) adopt a coiled-coil conformation.

Belongs to the class-I aminoacyl-tRNA synthetase family. ValS type 1 subfamily. In terms of assembly, monomer.

The protein localises to the cytoplasm. It carries out the reaction tRNA(Val) + L-valine + ATP = L-valyl-tRNA(Val) + AMP + diphosphate. In terms of biological role, catalyzes the attachment of valine to tRNA(Val). As ValRS can inadvertently accommodate and process structurally similar amino acids such as threonine, to avoid such errors, it has a 'posttransfer' editing activity that hydrolyzes mischarged Thr-tRNA(Val) in a tRNA-dependent manner. In Corynebacterium efficiens (strain DSM 44549 / YS-314 / AJ 12310 / JCM 11189 / NBRC 100395), this protein is Valine--tRNA ligase.